We begin with the raw amino-acid sequence, 67 residues long: Phycobilisome 7.8 kDa linker polypeptide, allophycocyanin-associated, core (67 aa).

A CpcD-like domain is found at 1 to 56 (MRVFKVTACVPSQTRIRTQRELQNTYFTKLVPYDNWFREQQRIMKMGGKIVKVELA).

This sequence belongs to the phycobilisome linker protein family.

Its subcellular location is the cellular thylakoid membrane. Rod linker protein, associated with allophycocyanin. Linker polypeptides determine the state of aggregation and the location of the disk-shaped phycobiliprotein units within the phycobilisome and modulate their spectroscopic properties in order to mediate a directed and optimal energy transfer. The sequence is that of Phycobilisome 7.8 kDa linker polypeptide, allophycocyanin-associated, core (apcC) from Arthrospira platensis (Spirulina platensis).